The sequence spans 195 residues: PRELI domain containing protein 3B (195 aa).

The region spanning 1–172 (MKIWTSEHVF…VIHKLNAEIE (172 aa)) is the PRELI/MSF1 domain. Ser-46 and Ser-51 each carry phosphoserine.

The protein belongs to the slowmo family.

The protein is PRELI domain containing protein 3B (Prelid3b) of Rattus norvegicus (Rat).